A 158-amino-acid polypeptide reads, in one-letter code: Small ribosomal subunit protein uS15 (158 aa).

Residues methionine 1–proline 18 show a composition bias toward basic residues. A disordered region spans residues methionine 1–alanine 21.

The protein belongs to the universal ribosomal protein uS15 family. In terms of assembly, part of the 30S ribosomal subunit.

This chain is Small ribosomal subunit protein uS15, found in Pyrococcus furiosus (strain ATCC 43587 / DSM 3638 / JCM 8422 / Vc1).